The primary structure comprises 209 residues: Eukaryotic translation initiation factor 4E (209 aa).

Residues 51–52, 97–98, and 153–158 contribute to the mRNA site; these read WH, WE, and RKQAYR.

Belongs to the eukaryotic initiation factor 4E family. As to quaternary structure, eIF4F is a multi-subunit complex, the composition of which varies with external and internal environmental conditions. It is composed of at least eIF4A, eIF4E and eIF4G. eIF4E is also known to interact with other partners.

Its function is as follows. Recognizes and binds the 7-methylguanosine-containing mRNA cap during an early step in the initiation of protein synthesis and facilitates ribosome binding by inducing the unwinding of the mRNAs secondary structures. The protein is Eukaryotic translation initiation factor 4E (TIF45) of Candida albicans (strain SC5314 / ATCC MYA-2876) (Yeast).